A 224-amino-acid polypeptide reads, in one-letter code: MNPTVAQQLSKTTRVEELAPGIEIIEECPRDIKALDGSPILLFGKWNVNDVVIRDPGLRRYMCLKPMLLPHTEGKYQNRKFGKAMIPIIERMMNQLMKPGRNAGKKQKAYKILKTAFDIIYVATGKNPVQVFVDAVVNVAPREEITRVIYGGIAYPVSVDVGPTRRLDLAIRWIAEGARACSFNNPRPIEECLANEIIAAANNDPASYALRRRDEMERVAATAR.

It belongs to the universal ribosomal protein uS7 family. In terms of assembly, part of the 30S ribosomal subunit.

Its function is as follows. One of the primary rRNA binding proteins, it binds directly to 16S rRNA where it nucleates assembly of the head domain of the 30S subunit. Is located at the subunit interface close to the decoding center. The polypeptide is Small ribosomal subunit protein uS7 (Caldivirga maquilingensis (strain ATCC 700844 / DSM 13496 / JCM 10307 / IC-167)).